Reading from the N-terminus, the 582-residue chain is L-fucose isomerase (582 aa).

Residues E333 and D357 each act as proton acceptor in the active site. The Mn(2+) site is built by E333, D357, and H520.

Belongs to the L-fucose isomerase family. The cofactor is Mn(2+).

The protein localises to the cytoplasm. It catalyses the reaction L-fucose = L-fuculose. The protein operates within carbohydrate degradation; L-fucose degradation; L-lactaldehyde and glycerone phosphate from L-fucose: step 1/3. Its function is as follows. Converts the aldose L-fucose into the corresponding ketose L-fuculose. The sequence is that of L-fucose isomerase from Vibrio vulnificus (strain YJ016).